The sequence spans 431 residues: Enolase (431 aa).

A (2R)-2-phosphoglycerate-binding site is contributed by glutamine 167. Glutamate 209 functions as the Proton donor in the catalytic mechanism. Mg(2+) contacts are provided by aspartate 246, glutamate 289, and aspartate 316. (2R)-2-phosphoglycerate is bound by residues lysine 341, arginine 370, serine 371, and lysine 392. The active-site Proton acceptor is lysine 341.

This sequence belongs to the enolase family. In terms of assembly, component of the RNA degradosome, a multiprotein complex involved in RNA processing and mRNA degradation. Requires Mg(2+) as cofactor.

It is found in the cytoplasm. Its subcellular location is the secreted. It localises to the cell surface. It carries out the reaction (2R)-2-phosphoglycerate = phosphoenolpyruvate + H2O. The protein operates within carbohydrate degradation; glycolysis; pyruvate from D-glyceraldehyde 3-phosphate: step 4/5. In terms of biological role, catalyzes the reversible conversion of 2-phosphoglycerate (2-PG) into phosphoenolpyruvate (PEP). It is essential for the degradation of carbohydrates via glycolysis. The polypeptide is Enolase (Shewanella halifaxensis (strain HAW-EB4)).